The following is a 470-amino-acid chain: Cysteine--tRNA ligase (470 aa).

Cys29 is a Zn(2+) binding site. A 'HIGH' region motif is present at residues Pro31–Asn41. Positions 211, 236, and 240 each coordinate Zn(2+). The 'KMSKS' region motif lies at Lys273 to Ser277. ATP is bound at residue Lys276.

The protein belongs to the class-I aminoacyl-tRNA synthetase family. In terms of assembly, monomer. Zn(2+) is required as a cofactor.

The protein localises to the cytoplasm. The catalysed reaction is tRNA(Cys) + L-cysteine + ATP = L-cysteinyl-tRNA(Cys) + AMP + diphosphate. This is Cysteine--tRNA ligase from Phenylobacterium zucineum (strain HLK1).